The chain runs to 446 residues: Argininosuccinate lyase (446 aa).

Belongs to the lyase 1 family. Argininosuccinate lyase subfamily.

Its subcellular location is the cytoplasm. The enzyme catalyses 2-(N(omega)-L-arginino)succinate = fumarate + L-arginine. It participates in amino-acid biosynthesis; L-arginine biosynthesis; L-arginine from L-ornithine and carbamoyl phosphate: step 3/3. This Parabacteroides distasonis (strain ATCC 8503 / DSM 20701 / CIP 104284 / JCM 5825 / NCTC 11152) protein is Argininosuccinate lyase.